The following is a 337-amino-acid chain: Histidine N-acetyltransferase (337 aa).

Positions 1 to 2 (MK) are cleaved as a propeptide — removed in mature form. The 137-residue stretch at 21–157 (LQFSVATEED…GILLMRFRAE (137 aa)) folds into the N-acetyltransferase domain.

In terms of tissue distribution, expressed exclusively in the brain and lens.

It carries out the reaction L-histidine + acetyl-CoA = N(alpha)-acetyl-L-histidine + CoA + H(+). Functionally, enzyme responsible for the N-acetyl-histidine (NAH) synthesis, which is a major constituent of brain and lens of ectothermic vertebrates. The sequence is that of Histidine N-acetyltransferase (hisat) from Oreochromis niloticus (Nile tilapia).